A 274-amino-acid chain; its full sequence is MASLREQIITELGVQPVIEPKTEVRRRVDFLKDYLRSTPAQGFVLGISGGQDSTLTGRLCQLAAEEVRAEGGEATFVAVRLPYGVQADEHDAAVAMEFIGPDRAVTVNVKPGVDATAGAVAEGLGLDALRDFVRGNIKARERMIIQYAIAGQENLLVVGTDHAAEAVTGFFTKYGDGGVDLTPLTGLTKRQGAALLQELGAPPSTWSKVPTADLEDDRPALPDEEALGLRYSEIDDYLEGKEVTEAVAARVEQLYTATRHKRTVPVSPLDSWWR.

46-53 (GISGGQDS) is a binding site for ATP. Asp-52 provides a ligand contact to Mg(2+). Arg-140 contacts deamido-NAD(+). Thr-160 is a binding site for ATP. Position 165 (Glu-165) interacts with Mg(2+). Deamido-NAD(+) contacts are provided by Lys-173 and Asp-180. The ATP site is built by Lys-189 and Thr-211. A deamido-NAD(+)-binding site is contributed by 260 to 261 (HK).

Belongs to the NAD synthetase family. In terms of assembly, homodimer.

It catalyses the reaction deamido-NAD(+) + NH4(+) + ATP = AMP + diphosphate + NAD(+) + H(+). Its pathway is cofactor biosynthesis; NAD(+) biosynthesis; NAD(+) from deamido-NAD(+) (ammonia route): step 1/1. Functionally, catalyzes the ATP-dependent amidation of deamido-NAD to form NAD. Uses ammonia as a nitrogen source. In Nocardia farcinica (strain IFM 10152), this protein is NH(3)-dependent NAD(+) synthetase.